The primary structure comprises 255 residues: ATP synthase subunit a (255 aa).

Residues 1-6 (MNFIIN) constitute a propeptide, removed in mature form. Helical transmembrane passes span 32-52 (LTSF…FSIL), 91-111 (LFPF…VSLV), 121-141 (LIWT…TGLA), 159-200 (PLVP…LAGL), and 219-251 (LSIL…IKDA).

In terms of assembly, F-type ATP synthases have 2 components, the catalytic core F(1) and the membrane-embedded component F(0), linked together by a central stalk and a peripheral stalk. The central stalk, also called rotor shaft, is often seen as part of F(1). The peripheral stalk is seen as part of F(0). F(0) contains the membrane channel next to the rotor. F-type ATP synthases form dimers but each monomer functions independently in ATP generation. The dimer consists of 17 different polypeptides: ATP1 (subunit alpha, 3 molecules per monomer, part of F(1)), ATP2 (subunit beta, 3 copies per monomer, part of F(1)), ATP3 (subunit gamma, part of the central stalk), ATP4 (subunit b, part of the peripheral stalk), ATP5/OSCP (subunit 5/OSCP, part of the peripheral stalk), ATP6 (subunit a, part of the peripheral stalk), ATP7 (subunit d, part of the peripheral stalk), ATP8 (subunit 8, part of the peripheral stalk), OLI1 (subunit c, part of the rotor, 10 molecules per monomer), ATP14 (subunit h, part of the peripheral stalk), ATP15 (subunit epsilon, part of the central stalk), ATP16 (subunit delta, part of the central stalk), ATP17 (subunit f, part of the peripheral stalk), ATP18 (subunit i/j, part of the peripheral stalk), ATP19 (subunit k, dimer-specific, at interface between monomers), ATP20 (subunit g, at interface between monomers), TIM11 (subunit e, at interface between monomers).

It is found in the mitochondrion inner membrane. Functionally, mitochondrial membrane ATP synthase (F(1)F(0) ATP synthase or Complex V) produces ATP from ADP in the presence of a proton gradient across the membrane which is generated by electron transport complexes of the respiratory chain. F-type ATP synthases consist of two structural domains, F(1) - containing the extramembraneous catalytic core, and F(0) - containing the membrane proton channel, linked together by a central stalk and a peripheral stalk. During catalysis, ATP synthesis in the catalytic domain of F(1) is coupled via a rotary mechanism of the central stalk subunits to proton translocation. Key component of the proton channel; it may play a direct role in the translocation of protons across the membrane. The protein is ATP synthase subunit a of Yarrowia lipolytica (strain CLIB 122 / E 150) (Yeast).